Reading from the N-terminus, the 133-residue chain is Small ribosomal subunit protein uS8 (133 aa).

Belongs to the universal ribosomal protein uS8 family. In terms of assembly, part of the 30S ribosomal subunit.

In terms of biological role, one of the primary rRNA binding proteins, it binds directly to 16S rRNA central domain where it helps coordinate assembly of the platform of the 30S subunit. This is Small ribosomal subunit protein uS8 from Saccharolobus solfataricus (strain ATCC 35092 / DSM 1617 / JCM 11322 / P2) (Sulfolobus solfataricus).